The following is a 301-amino-acid chain: NAD kinase (301 aa).

The Proton acceptor role is filled by aspartate 81. NAD(+)-binding positions include 81 to 82 (DG), 155 to 156 (NE), histidine 166, arginine 183, aspartate 185, 196 to 201 (TAYSLS), and glutamine 256.

The protein belongs to the NAD kinase family. The cofactor is a divalent metal cation.

The protein resides in the cytoplasm. It catalyses the reaction NAD(+) + ATP = ADP + NADP(+) + H(+). Functionally, involved in the regulation of the intracellular balance of NAD and NADP, and is a key enzyme in the biosynthesis of NADP. Catalyzes specifically the phosphorylation on 2'-hydroxyl of the adenosine moiety of NAD to yield NADP. In Mannheimia succiniciproducens (strain KCTC 0769BP / MBEL55E), this protein is NAD kinase.